The primary structure comprises 134 residues: Transcription antitermination protein NusB (134 aa).

Belongs to the NusB family.

Functionally, involved in transcription antitermination. Required for transcription of ribosomal RNA (rRNA) genes. Binds specifically to the boxA antiterminator sequence of the ribosomal RNA (rrn) operons. The chain is Transcription antitermination protein NusB from Shewanella oneidensis (strain ATCC 700550 / JCM 31522 / CIP 106686 / LMG 19005 / NCIMB 14063 / MR-1).